Consider the following 312-residue polypeptide: Ribosomal RNA small subunit methyltransferase H (312 aa).

Residues 33 to 35, Asp53, Phe80, Asp102, and Gln109 each bind S-adenosyl-L-methionine; that span reads GGH.

This sequence belongs to the methyltransferase superfamily. RsmH family.

The protein localises to the cytoplasm. It carries out the reaction cytidine(1402) in 16S rRNA + S-adenosyl-L-methionine = N(4)-methylcytidine(1402) in 16S rRNA + S-adenosyl-L-homocysteine + H(+). In terms of biological role, specifically methylates the N4 position of cytidine in position 1402 (C1402) of 16S rRNA. This Heliobacterium mobile (Heliobacillus mobilis) protein is Ribosomal RNA small subunit methyltransferase H.